We begin with the raw amino-acid sequence, 298 residues long: Formylmethanofuran--tetrahydromethanopterin formyltransferase (298 aa).

It belongs to the FTR family. As to quaternary structure, homotetramer.

It localises to the cytoplasm. The enzyme catalyses N-formylmethanofuran + 5,6,7,8-tetrahydromethanopterin + H(+) = N(5)-formyl-5,6,7,8-tetrahydromethanopterin + methanofuran. It participates in one-carbon metabolism; formaldehyde degradation; formate from formaldehyde (H(4)MPT route): step 4/5. In terms of biological role, catalyzes the transfer of a formyl group from 5-formyl tetrahydromethanopterin (5-formyl-H(4)MPT) to methanofuran (MFR) to produce formylmethanofuran (formyl-MFR) and tetrahydromethanopterin (H(4)MPT). The protein is Formylmethanofuran--tetrahydromethanopterin formyltransferase of Methylococcus capsulatus (strain ATCC 33009 / NCIMB 11132 / Bath).